We begin with the raw amino-acid sequence, 567 residues long: Glutamate--tRNA ligase (567 aa).

The short motif at 106–116 (PNPDGPLHLGN) is the 'HIGH' region element.

This sequence belongs to the class-I aminoacyl-tRNA synthetase family. Glutamate--tRNA ligase type 2 subfamily.

It is found in the cytoplasm. The catalysed reaction is tRNA(Glu) + L-glutamate + ATP = L-glutamyl-tRNA(Glu) + AMP + diphosphate. Catalyzes the attachment of glutamate to tRNA(Glu) in a two-step reaction: glutamate is first activated by ATP to form Glu-AMP and then transferred to the acceptor end of tRNA(Glu). The chain is Glutamate--tRNA ligase from Sulfolobus acidocaldarius (strain ATCC 33909 / DSM 639 / JCM 8929 / NBRC 15157 / NCIMB 11770).